Here is a 253-residue protein sequence, read N- to C-terminus: ATP synthase subunit a (253 aa).

A run of 6 helical transmembrane segments spans residues 27–47 (ISFT…IGFF), 87–107 (FFPF…IGMV), 117–137 (IIVT…VGLI), 146–166 (LFAP…IEII), 196–216 (FTVM…LAFA), and 224–244 (LEFL…CVYL).

It belongs to the ATPase A chain family. As to quaternary structure, F-type ATPases have 2 components, CF(1) - the catalytic core - and CF(0) - the membrane proton channel. CF(1) has five subunits: alpha(3), beta(3), gamma(1), delta(1), epsilon(1). CF(0) has three main subunits: a(1), b(2) and c(9-12). The alpha and beta chains form an alternating ring which encloses part of the gamma chain. CF(1) is attached to CF(0) by a central stalk formed by the gamma and epsilon chains, while a peripheral stalk is formed by the delta and b chains.

The protein localises to the cell inner membrane. Its function is as follows. Key component of the proton channel; it plays a direct role in the translocation of protons across the membrane. The protein is ATP synthase subunit a of Hyphomonas neptunium (strain ATCC 15444).